The following is a 360-amino-acid chain: Phospho-N-acetylmuramoyl-pentapeptide-transferase (360 aa).

At 1 to 25 the chain is on the periplasmic side; the sequence is MLVWLAEHLVKYYSGFNVFSYLTFR. A helical transmembrane segment spans residues 26–46; that stretch reads AIVSLLTALFISLWMGPRMIA. Residues 47–71 are Cytoplasmic-facing; the sequence is RLQKLSFGQVVRNDGPESHFSKRGT. Residues 72 to 92 form a helical membrane-spanning segment; it reads PTMGGIMILTAIVISVLLWAY. P93 is a topological domain (periplasmic). A helical transmembrane segment spans residues 94–114; the sequence is SNPYVWCVLVVLIGYGIIGFV. Topologically, residues 115–131 are cytoplasmic; that stretch reads DDYHKVVRKDTKGLIAR. A helical membrane pass occupies residues 132 to 152; it reads WKYFWMSVIALGVAFALYLVG. At 153–167 the chain is on the periplasmic side; the sequence is KDTPATQLVVPFFKD. A helical transmembrane segment spans residues 168–188; it reads VMPQLGLFYILLSYFVIVGTG. Topologically, residues 189-198 are cytoplasmic; it reads NAVNLTDGLD. Residues 199-219 form a helical membrane-spanning segment; that stretch reads GLAIMPTVFVAAGFALVAWAT. Residues 220–235 are Periplasmic-facing; sequence GNMNFANYLHIPYLRY. A helical transmembrane segment spans residues 236-256; sequence AGELVIVCTAIVGAGLGFLWF. Over 257 to 262 the chain is Cytoplasmic; that stretch reads NTYPAQ. Residues 263–283 traverse the membrane as a helical segment; that stretch reads VFMGDVGSLALGGALGIIAVL. Over 284-287 the chain is Periplasmic; it reads LRQE. Residues 288-308 traverse the membrane as a helical segment; the sequence is FLLVIMGGVFVVETLSVILQV. Residues 309–337 are Cytoplasmic-facing; that stretch reads GSFKLRGQRIFRMAPIHHHYELKGWPEPR. Residues 338-358 traverse the membrane as a helical segment; it reads VIVRFWIISLMLVLIGLATLK. The Periplasmic segment spans residues 359–360; that stretch reads VR.

It belongs to the glycosyltransferase 4 family. MraY subfamily. Mg(2+) is required as a cofactor.

Its subcellular location is the cell inner membrane. The enzyme catalyses UDP-N-acetyl-alpha-D-muramoyl-L-alanyl-gamma-D-glutamyl-meso-2,6-diaminopimeloyl-D-alanyl-D-alanine + di-trans,octa-cis-undecaprenyl phosphate = di-trans,octa-cis-undecaprenyl diphospho-N-acetyl-alpha-D-muramoyl-L-alanyl-D-glutamyl-meso-2,6-diaminopimeloyl-D-alanyl-D-alanine + UMP. It functions in the pathway cell wall biogenesis; peptidoglycan biosynthesis. Catalyzes the initial step of the lipid cycle reactions in the biosynthesis of the cell wall peptidoglycan: transfers peptidoglycan precursor phospho-MurNAc-pentapeptide from UDP-MurNAc-pentapeptide onto the lipid carrier undecaprenyl phosphate, yielding undecaprenyl-pyrophosphoryl-MurNAc-pentapeptide, known as lipid I. This is Phospho-N-acetylmuramoyl-pentapeptide-transferase from Salmonella paratyphi A (strain ATCC 9150 / SARB42).